A 601-amino-acid polypeptide reads, in one-letter code: Deoxyhypusine synthase (601 aa).

Residues 109-113 (ANLMG) and 184-186 (SGG) each bind NAD(+). Spermidine is bound at residue 189–190 (EH). The disordered stretch occupies residues 210-242 (GHVSSTVSSEATAPPKGLQQRAEKPLGTRAAAG). Residues 211-220 (HVSSTVSSEA) are compositionally biased toward polar residues. Residue Asp-398 coordinates NAD(+). The interval 411–451 (PAARPAHRKGGPVADENAGNSKELKRSRKASSSSSTSATAV) is disordered. Over residues 440–451 (ASSSSSTSATAV) the composition is skewed to low complexity. Gly-489 is an NAD(+) binding site. His-494 contributes to the spermidine binding site. Residue 514–515 (NG) participates in NAD(+) binding. Residues 520–522 (GSD) and 529–535 (EALSWGK) contribute to the spermidine site. Lys-535 acts as the Nucleophile in catalysis. 548 to 549 (EV) lines the NAD(+) pocket. The interval 568-601 (RRATDDAQPRRKRSSRGARPPQDVSGHSHLCRGE) is disordered.

Belongs to the deoxyhypusine synthase family. Homodimer. Requires NAD(+) as cofactor.

The enzyme catalyses [eIF5A protein]-L-lysine + spermidine = [eIF5A protein]-deoxyhypusine + propane-1,3-diamine. It functions in the pathway protein modification; eIF5A hypusination. N1-guanyl-1,7-diaminoheptane has a small inhibitory effect on activity. Functionally, catalyzes the NAD-dependent oxidative cleavage of spermidine and the subsequent transfer of the butylamine moiety of spermidine to the epsilon-amino group of a specific lysine residue of the eIF-5A precursor protein to form the intermediate deoxyhypusine residue. The protein is Deoxyhypusine synthase of Leishmania donovani.